A 173-amino-acid chain; its full sequence is MMKRDKKEEIAQQIAEKFQKSQGFYFTEFQGLDVQKMGQLRLEFRKAGIEYKVVKNTLIKKALRDAAGADKLAEGLKNTTAVAFSYDDPIAPAKIIKKFSKDNEALKFKMASVDGTVFGADALPQLSEMLSKTDNIARTAGLINNMIASVPMVMNAVMRDLVSVIDQVGKLEK.

Belongs to the universal ribosomal protein uL10 family. In terms of assembly, part of the ribosomal stalk of the 50S ribosomal subunit. The N-terminus interacts with L11 and the large rRNA to form the base of the stalk. The C-terminus forms an elongated spine to which L12 dimers bind in a sequential fashion forming a multimeric L10(L12)X complex.

Its function is as follows. Forms part of the ribosomal stalk, playing a central role in the interaction of the ribosome with GTP-bound translation factors. In Chlorobaculum parvum (strain DSM 263 / NCIMB 8327) (Chlorobium vibrioforme subsp. thiosulfatophilum), this protein is Large ribosomal subunit protein uL10.